The primary structure comprises 717 residues: F-box only protein 42 (717 aa).

Acidic residues predominate over residues Met1–Glu30. The disordered stretch occupies residues Met1–Met47. The span at Glu31–His43 shows a compositional bias: basic and acidic residues. One can recognise an F-box domain in the interval Asn44–Phe93. 4 Kelch repeats span residues Ser132 to Asp184, Leu186 to Asp242, Met244 to Asp293, and Thr295 to His342. Disordered stretches follow at residues Arg361 to Glu472 and Pro508 to Thr539. Residues Pro363–Ser376 show a composition bias toward low complexity. A phosphoserine mark is found at Ser365 and Ser373. The residue at position 378 (Thr378) is a Phosphothreonine. Composition is skewed to polar residues over residues Gln416–Gly426 and Ser455–Ser469. Residue Ser552 is modified to Phosphoserine. Residues Gly570 to Gly596 are compositionally biased toward low complexity. The tract at residues Gly570–Leu635 is disordered.

As to quaternary structure, component of some SCF complex, composed of CUL1, SKP1, RBX1 and FBXO42. Interacts (via the kelch domain) with p53/TP53; interaction is direct.

In terms of biological role, substrate-recognition component of some SCF (SKP1-CUL1-F-box protein)-type E3 ubiquitin ligase complex. Specifically recognizes p53/TP53, promoting its ubiquitination and degradation. This is F-box only protein 42 (FBXO42) from Pongo abelii (Sumatran orangutan).